A 364-amino-acid chain; its full sequence is MPILLDPVRAPALDALLASANTQGLDWRIEAAADATLPRIRGIGTLASAGPEEISFLTNPRYQSQLAGTRAAAVIVTPDAAQALANDPSAPACARVVCPHPYLLYARLAQWFDAARRPRLPASVHPLAVVAPDAVIEDDVRIGPHCVVEAGASIGRGSTLGPGCVIGEGSSLGPDCLLHARVTLYANVRIGARAILHSGVVLGADGFGFAPDPTLGQGAWGKIAQLGGVRIGDDVEIGANTTIDRGALEDTDIGDGVKLDNQIMLGHNVRVGAHTAMAACVGVAGSTVIGSRCTIGGAAMLSGHLTLGDDVHISGGTAVTSNILQPGRYTGVYPYAEHGEWQRNAAVLQQLSQLRRRLRALEKA.

His-267 (proton acceptor) is an active-site residue.

Belongs to the transferase hexapeptide repeat family. LpxD subfamily. As to quaternary structure, homotrimer.

The catalysed reaction is a UDP-3-O-[(3R)-3-hydroxyacyl]-alpha-D-glucosamine + a (3R)-hydroxyacyl-[ACP] = a UDP-2-N,3-O-bis[(3R)-3-hydroxyacyl]-alpha-D-glucosamine + holo-[ACP] + H(+). Its pathway is bacterial outer membrane biogenesis; LPS lipid A biosynthesis. Functionally, catalyzes the N-acylation of UDP-3-O-acylglucosamine using 3-hydroxyacyl-ACP as the acyl donor. Is involved in the biosynthesis of lipid A, a phosphorylated glycolipid that anchors the lipopolysaccharide to the outer membrane of the cell. This is UDP-3-O-acylglucosamine N-acyltransferase from Bordetella petrii (strain ATCC BAA-461 / DSM 12804 / CCUG 43448).